The primary structure comprises 472 residues: ATP synthase subunit beta (472 aa).

ATP is bound at residue 149–156 (GGAGVGKT).

It belongs to the ATPase alpha/beta chains family. In terms of assembly, F-type ATPases have 2 components, CF(1) - the catalytic core - and CF(0) - the membrane proton channel. CF(1) has five subunits: alpha(3), beta(3), gamma(1), delta(1), epsilon(1). CF(0) has three main subunits: a(1), b(2) and c(9-12). The alpha and beta chains form an alternating ring which encloses part of the gamma chain. CF(1) is attached to CF(0) by a central stalk formed by the gamma and epsilon chains, while a peripheral stalk is formed by the delta and b chains.

It localises to the cell inner membrane. The catalysed reaction is ATP + H2O + 4 H(+)(in) = ADP + phosphate + 5 H(+)(out). Produces ATP from ADP in the presence of a proton gradient across the membrane. The catalytic sites are hosted primarily by the beta subunits. The chain is ATP synthase subunit beta from Pelagibacter ubique (strain HTCC1062).